Consider the following 1883-residue polypeptide: DDB1- and CUL4-associated factor homolog 1 (1883 aa).

2 disordered regions span residues 1–47 (MDGQ…QSVE) and 309–340 (KPGDDNSVRDDPSRHRLNRSKSRGRGRVHEGA). A compositionally biased stretch (acidic residues) spans 37 to 47 (NPEEGEEQSVE). Positions 309-322 (KPGDDNSVRDDPSR) are enriched in basic and acidic residues. The span at 323 to 334 (HRLNRSKSRGRG) shows a compositional bias: basic residues. Serine 349 carries the phosphoserine modification. Residues 882-924 (NKPPLAQNHQPVPGQATTRPSTDVAVGTQSTGNAPQTPVAPAS) form a disordered region. Over residues 888–917 (QNHQPVPGQATTRPSTDVAVGTQSTGNAPQ) the composition is skewed to polar residues. Residues 1087 to 1119 (DSKELLLLIHEHLQASGLGDTASALLKEAQLTP) form the LisH domain. 3 disordered regions span residues 1157-1202 (TSKP…QWPS), 1214-1260 (PKIN…ALPQ), and 1310-1377 (SELR…NPER). Over residues 1238–1251 (LTFSPSFSSQSRKQ) the composition is skewed to low complexity. Residues 1310–1329 (SELRDSSVPGKRIDLGERRN) are compositionally biased toward basic and acidic residues. Over residues 1330 to 1362 (STFADGSGLQTPASALDANQSGSSRLGQMTPAS) the composition is skewed to polar residues. 5 WD repeats span residues 1464–1503 (DETALFTCIALLGGTNHIAVGSHAGEIKIFEASSGSMLES), 1506–1546 (GHQA…GGPR), 1548–1586 (SFDGCKAAKFSNSGLQFAALSCEASRKDVLLYDVQTCSP), 1587–1626 (CQKLTDTVTSSRSNPYSLVHFSPCDTLILWNGVLWDRRIP), and 1633–1671 (DQFTDYGGGGFHPSRNEVIINSEIWDMRTFKLLRSVPSL). 2 consecutive short sequence motifs (DWD box) follow at residues 1619-1626 (VLWDRRIP) and 1655-1662 (EIWDMRTF). The disordered stretch occupies residues 1763-1883 (YEIGRRRPTD…DDYRDNIRSS (121 aa)). 2 stretches are compositionally biased toward acidic residues: residues 1773 to 1796 (DDSDPDDDDETEDEDEDDEEEDDL) and 1808 to 1864 (DSGD…DGEM).

This sequence belongs to the VPRBP/DCAF1 family. In terms of assembly, component of the CUL4-RBX1-DDB1-DCAF1 E3 ubiquitin-protein ligase complex. Interacts with DDB1A through its DWD motifs. In terms of tissue distribution, ubiquitous but predominantly expressed in the inflorescence and roots.

The protein localises to the nucleus. The protein operates within protein modification; protein ubiquitination. Component of the CUL4-RBX1-DDB1-DCAF1 E3 ubiquitin-protein ligase complex, DCAF1 may function as the substrate recognition module within this complex. Appears to be required for plant embryogenesis and to affect several other developmental processes including leaf, shoot, and flower development. The protein is DDB1- and CUL4-associated factor homolog 1 (DCAF1) of Arabidopsis thaliana (Mouse-ear cress).